The following is a 396-amino-acid chain: Elongation factor Tu (396 aa).

The tr-type G domain maps to 10–205 (KTHANIGTIG…AVDEYIPTPE (196 aa)). The interval 19-26 (GHVDHGKT) is G1. 19-26 (GHVDHGKT) provides a ligand contact to GTP. Thr-26 lines the Mg(2+) pocket. The interval 61–65 (GITIS) is G2. The tract at residues 82–85 (DCPG) is G3. GTP is bound by residues 82–86 (DCPGH) and 137–140 (NKCD). The tract at residues 137–140 (NKCD) is G4. Positions 175-177 (SAL) are G5.

The protein belongs to the TRAFAC class translation factor GTPase superfamily. Classic translation factor GTPase family. EF-Tu/EF-1A subfamily. As to quaternary structure, monomer.

Its subcellular location is the cytoplasm. It carries out the reaction GTP + H2O = GDP + phosphate + H(+). GTP hydrolase that promotes the GTP-dependent binding of aminoacyl-tRNA to the A-site of ribosomes during protein biosynthesis. This chain is Elongation factor Tu, found in Shouchella clausii (strain KSM-K16) (Alkalihalobacillus clausii).